Consider the following 539-residue polypeptide: Beta-apo-4'-carotenal oxygenase (539 aa).

Catalysis depends on residues Glu228 and Cys262.

The protein belongs to the aldehyde dehydrogenase family.

The catalysed reaction is 4'-apo-beta-carotenal + NAD(+) + H2O = neurosporaxanthin + NADH + 2 H(+). Functionally, beta-apo-4'-carotenal oxygenase involved in the last step of synthesis of neurosporaxanthin, a carboxylic apocarotenoid acting as an essential protective pigments and leading to orange pigmentation. Converts the aldehyde beta-apo-4'-carotenal into neurosporaxanthin. Is also able to use shorter apocarotenals as substrates (such as beta-apo-8'-carotenal (C30), beta-apo-10'-carotenal (C27), or the acyclic apocarotenal apo-8'-lycopenal (C30)), indicating wide substrate specificity. Neurosporaxanthin is synthesized from geranyl-geranyl pyrophosphate (GGPP) through several enzymatic activities. Phytoene synthase activity performed by the bifunctional enzyme carAR first produces phytoene from geranyl-geranyl pyrophosphate (GGPP). The phytoene dehydrogenase carB then introduces 4 desaturations to lead to lycopene which is substrate of the carotene cyclase activity of carAR that leads to the production of gamma-carotene. CarB then performs a 5th desaturation reaction to yield torulene. Torulene is the substrate of the dioxidase carT that breaks the molecule, removing five carbon atoms to yield beta-apo-4'-carotenal, whereas the aldehyde dehydrogenase carD mediates the last step by converting beta-apo-4'-carotenal into neurosporaxanthin. This chain is Beta-apo-4'-carotenal oxygenase, found in Gibberella fujikuroi (strain CBS 195.34 / IMI 58289 / NRRL A-6831) (Bakanae and foot rot disease fungus).